The sequence spans 67 residues: UPF0434 protein Patl_1782 (67 aa).

The protein belongs to the UPF0434 family.

The sequence is that of UPF0434 protein Patl_1782 from Pseudoalteromonas atlantica (strain T6c / ATCC BAA-1087).